The chain runs to 868 residues: MESSFGLLLALLTLTIIHIVQAQDPQGFISLDCGLPANETSPYTETQTGLLFSSDATFIQSGKTGRVQANQESKFLKPYRTLRYFPEGVRNCYNLSVFKERKYLIAASFLYGNYDGHNIAPVFDLYLGPNLWAKIDLQDVNGTGEEILHIPTSNSLQICLVQTGETTPLISSLELRPMRTGSYTTVSGSLKTYRRLYFKKSGSRLRYSKDVYDRSWFPRFMDEWTQISTALGVINTNIYQPPEDALKNAATPTDASAPLTFKWNSEKLDVQYYFYAHYAEIQDLQANDTREFNILLNGQNLSVTGPEVPDKLSIKTFQSSSPISCNGWACNFQLIRTKRSTLPPLLNALEVYTVIQFPRSETDESDVVAMKNISASYGLSRINWQGDPCFPQQLRWDALDCTNRNISQPPRITSLNLSSSRLNGTIAAAIQSITQLETLDLSYNNLTGEVPEFLGKMKSLSVINLSGNNLNGSIPQALRKKRLKLYLEGNPRLIKPPKKEFPVAIVTLVVFVTVIVVLFLVFRKKMSTIVKGLRLPPRTSMVDVTFSNKKSKRFTYSEVVQVTKNFQRVLGKGGFGMVYHGTVKGSEQVAVKVLSQSSTQGSKEFKAEVDLLLRVHHTNLVSLVGYCCEGDYLALVYEFLPNGDLKQHLSGKGGNSIINWSIRLRIALEAALGLEYLHIGCTPPMVHRDVKTANILLDENFKAKLADFGLSRSFQGEGESQESTTIAGTLGYLDPECYHSGRLGEKSDVYSFGIVLLEMITNQPVINQTSGDSHITQWVGFQMNRGDILEIMDPNLRKDYNINSAWRALELAMSCAYPSSSKRPSMSQVIHELKECIACENTGISKNRSLEYQEMNVSLDTTAVPMAR.

The first 22 residues, 1 to 22, serve as a signal peptide directing secretion; sequence MESSFGLLLALLTLTIIHIVQA. The Extracellular segment spans residues 23 to 500; that stretch reads QDPQGFISLD…PRLIKPPKKE (478 aa). Asparagine 38, asparagine 94, asparagine 141, asparagine 287, asparagine 300, asparagine 372, asparagine 405, asparagine 416, asparagine 423, asparagine 445, asparagine 464, and asparagine 471 each carry an N-linked (GlcNAc...) asparagine glycan. 3 LRR repeats span residues 409-432, 433-459, and 461-481; these read PPRITSLNLSSSRLNGTIAAAIQS, ITQLETLDLSYNNLTGEVPEFLGKMKS, and SVINLSGNNLNGSIPQALRKK. The helical transmembrane segment at 501–521 threads the bilayer; the sequence is FPVAIVTLVVFVTVIVVLFLV. Residues 522 to 868 lie on the Cytoplasmic side of the membrane; sequence FRKKMSTIVK…LDTTAVPMAR (347 aa). Position 555 is a phosphothreonine (threonine 555). The region spanning 564 to 834 is the Protein kinase domain; the sequence is KNFQRVLGKG…SMSQVIHELK (271 aa). ATP contacts are provided by residues 570–578 and lysine 592; that span reads LGKGGFGMV. Tyrosine 637 bears the Phosphotyrosine mark. Aspartate 689 acts as the Proton acceptor in catalysis. A Phosphoserine modification is found at serine 723. Residues threonine 724 and threonine 729 each carry the phosphothreonine modification.

The protein belongs to the protein kinase superfamily. Ser/Thr protein kinase family. Post-translationally, autophosphorylated on Tyr and Thr residues.

The protein resides in the cell membrane. The catalysed reaction is L-seryl-[protein] + ATP = O-phospho-L-seryl-[protein] + ADP + H(+). It carries out the reaction L-threonyl-[protein] + ATP = O-phospho-L-threonyl-[protein] + ADP + H(+). The enzyme catalyses L-tyrosyl-[protein] + ATP = O-phospho-L-tyrosyl-[protein] + ADP + H(+). Probable receptor with a dual specificity kinase activity acting on both serine/threonine- and tyrosine-containing substrates. In Arabidopsis thaliana (Mouse-ear cress), this protein is Receptor-like protein kinase At5g59670.